Reading from the N-terminus, the 492-residue chain is MKYKDLRDFIAMLEQQGKLKRIAHPVSPHLEMTEIADRVLRAEGPALLFEHPVKPDGTRYDYPVLANLFGTPERVAMGMGADSVSKLREIGQTLAYLKEPEPPKGIKDAFSKLPLLKDIWSMAPNVVKNAPCQEIVWEGEDVDLYQLPIQHCWPEDVAPLVTWGLTVTRGPHKKRQNLGIYRQQLIGINKLIMRWLSHRGGALDYQEFRKLNPDTPYPVAVVLGCDPATILGAVTPVPDTLSEYQFAGLLRGSRTELVKCIGNDLQVPARAEIVLEGVIHPNETALEGPYGDHTGYYNEQDHFPVFTVERITMRENPIYHSTYTGKPPDEPAVLGVALNEVFVPLLQKQFPEITDFYLPPEGCSYRMAVVSMKKQYAGHAKRVMMGCWSFLRQFMYTKFIIVVDDDVDVRDWKEVIWAVTTRMDPVRDTVLMENTPIDYLDFASPVSGLGGKMGLDATNKWPGETDREWGRVIKKDPAVTAKIDEIWEELGL.

Residue N177 participates in Mn(2+) binding. Prenylated FMN contacts are provided by residues 180 to 182, 194 to 196, and 199 to 200; these read IYR, RWL, and RG. Mn(2+) is bound at residue E243. The Proton donor role is filled by D292.

This sequence belongs to the UbiD family. In terms of assembly, homohexamer. Prenylated FMN is required as a cofactor. Mn(2+) serves as cofactor.

It localises to the cell membrane. The catalysed reaction is a 4-hydroxy-3-(all-trans-polyprenyl)benzoate + H(+) = a 2-(all-trans-polyprenyl)phenol + CO2. It functions in the pathway cofactor biosynthesis; ubiquinone biosynthesis. Functionally, catalyzes the decarboxylation of 3-octaprenyl-4-hydroxy benzoate to 2-octaprenylphenol, an intermediate step in ubiquinone biosynthesis. The protein is 3-octaprenyl-4-hydroxybenzoate carboxy-lyase of Neisseria meningitidis serogroup A / serotype 4A (strain DSM 15465 / Z2491).